The chain runs to 216 residues: Nudix hydrolase 26, chloroplastic (216 aa).

The N-terminal 53 residues, 1-53, are a transit peptide targeting the chloroplast; sequence MALYRPLLLHHPTSPSVTTFLRNYPSKPIKFSSLPFLHRCRKSRVSSSSARCC. Positions 62 to 209 constitute a Nudix hydrolase domain; the sequence is GYRRNVGVCL…KKPVYKEVMS (148 aa). A Nudix box motif is present at residues 95–116; that stretch reads GGIDEGEDPRVAVMRELKEETG. Residues Glu110 and Glu114 each coordinate Mn(2+).

It belongs to the Nudix hydrolase family. It depends on Mg(2+) as a cofactor. Requires Mn(2+) as cofactor. In terms of tissue distribution, expressed in roots, leaves, stems and inflorescences.

The protein localises to the plastid. It localises to the chloroplast. Functionally, mediates the hydrolysis of some nucleoside diphosphate derivatives. Can use diadenosine 5',5'''-P(1)P(5) pentaphosphate (Ap(5)A), diadenosine 5',5'''-P(1)P(4) tetraphosphate (Ap(4)A) and diadenosine 5',5'''-P(1)P(3) triphosphate (Ap(3)A) as substrates. This is Nudix hydrolase 26, chloroplastic (NUDT26) from Arabidopsis thaliana (Mouse-ear cress).